We begin with the raw amino-acid sequence, 437 residues long: F-box/FBD/LRR-repeat protein At5g22700 (437 aa).

An F-box domain is found at 5 to 51 (GDRISSLPDELLCQILSNLPTKNAVTTSILSTRWRSIWLSTPVLDID). LRR repeat units lie at residues 86–113 (RDDV…EVDC), 134–160 (SLRL…HLEE), 161–186 (NIYY…TVVR), 187–210 (IVDI…KLVL), 215–240 (GWFI…SLKD), 272–297 (PVTF…TISG), and 322–350 (NARF…VLGL). One can recognise an FBD domain in the interval 361 to 406 (RVSSVPPCFLSSLEFVEIRSRLCRKRYVMKVARYFAKNSVMLKKFV).

The chain is F-box/FBD/LRR-repeat protein At5g22700 from Arabidopsis thaliana (Mouse-ear cress).